The primary structure comprises 125 residues: Cu-Zn superoxide dismutase-like protein OPG175 (125 aa).

An intrachain disulfide couples Cys-52 to Cys-102.

It belongs to the Cu-Zn superoxide dismutase family.

It is found in the virion. The protein localises to the host cytoplasm. Its function is as follows. Superoxide dismutase-like protein with no enzymatic activity. The sequence is that of Cu-Zn superoxide dismutase-like protein OPG175 (OPG175) from Cowpox virus (strain Brighton Red) (CPV).